The primary structure comprises 696 residues: Methionine--tRNA ligase (696 aa).

Residues 12 to 22 carry the 'HIGH' region motif; it reads PYANGPLHLGH. The Zn(2+) site is built by Cys-143, Cys-146, Cys-156, and Cys-159. The short motif at 330 to 334 is the 'KMSKS' region element; it reads KMSKS. An ATP-binding site is contributed by Lys-333. The region spanning 593–696 is the tRNA-binding domain; the sequence is DFAKLDLRIG…AGAQPGMPVR (104 aa).

This sequence belongs to the class-I aminoacyl-tRNA synthetase family. MetG type 1 subfamily. In terms of assembly, homodimer. Zn(2+) is required as a cofactor.

It is found in the cytoplasm. The enzyme catalyses tRNA(Met) + L-methionine + ATP = L-methionyl-tRNA(Met) + AMP + diphosphate. In terms of biological role, is required not only for elongation of protein synthesis but also for the initiation of all mRNA translation through initiator tRNA(fMet) aminoacylation. The protein is Methionine--tRNA ligase of Xanthomonas campestris pv. campestris (strain 8004).